A 231-amino-acid polypeptide reads, in one-letter code: Ion-translocating oxidoreductase complex subunit E (231 aa).

Helical transmembrane passes span 18-38 (GLVQ…VTNA), 39-59 (LGLG…VSLV), 69-89 (IPVF…LINA), 93-113 (GLYL…VIIG), 128-148 (AFDG…LGAG), and 182-202 (PFLL…LIAG).

This sequence belongs to the NqrDE/RnfAE family. The complex is composed of six subunits: RnfA, RnfB, RnfC, RnfD, RnfE and RnfG.

It is found in the cell inner membrane. Part of a membrane-bound complex that couples electron transfer with translocation of ions across the membrane. The chain is Ion-translocating oxidoreductase complex subunit E from Shewanella denitrificans (strain OS217 / ATCC BAA-1090 / DSM 15013).